The sequence spans 69 residues: Putative membrane protein insertion efficiency factor (69 aa).

It belongs to the UPF0161 family.

It is found in the cell membrane. In terms of biological role, could be involved in insertion of integral membrane proteins into the membrane. This is Putative membrane protein insertion efficiency factor from Alkaliphilus oremlandii (strain OhILAs) (Clostridium oremlandii (strain OhILAs)).